A 944-amino-acid chain; its full sequence is Translation factor GUF1 homolog, mitochondrial (944 aa).

Residues 201–379 (KNVRNFCILA…IITDIPYPPI (179 aa)) form the tr-type G domain. GTP is bound by residues 210-217 (AHIDSGKS), 271-275 (DTPGH), and 325-328 (NKID).

This sequence belongs to the TRAFAC class translation factor GTPase superfamily. Classic translation factor GTPase family. LepA subfamily.

It is found in the mitochondrion inner membrane. It carries out the reaction GTP + H2O = GDP + phosphate + H(+). Functionally, promotes mitochondrial protein synthesis. May act as a fidelity factor of the translation reaction, by catalyzing a one-codon backward translocation of tRNAs on improperly translocated ribosomes. Binds to mitochondrial ribosomes in a GTP-dependent manner. The protein is Translation factor GUF1 homolog, mitochondrial of Plasmodium yoelii yoelii.